Consider the following 118-residue polypeptide: Fluoride-specific ion channel FluC 1 (118 aa).

4 helical membrane-spanning segments follow: residues 5–25, 39–59, 61–81, and 98–118; these read FLLV…ISIF, FFIN…ALGP, WQLF…TFKV, and YVGL…MLGV. Na(+) is bound by residues glycine 71 and threonine 74.

This sequence belongs to the fluoride channel Fluc/FEX (TC 1.A.43) family.

The protein localises to the cell membrane. It carries out the reaction fluoride(in) = fluoride(out). Its activity is regulated as follows. Na(+) is not transported, but it plays an essential structural role and its presence is essential for fluoride channel function. Its function is as follows. Fluoride-specific ion channel. Important for reducing fluoride concentration in the cell, thus reducing its toxicity. In Listeria innocua serovar 6a (strain ATCC BAA-680 / CLIP 11262), this protein is Fluoride-specific ion channel FluC 1.